Reading from the N-terminus, the 579-residue chain is Rhoptry surface protein CERLI2 (579 aa).

Residues 52–84 (LHNYRTFYLLIKINEIFNINKYKQIYIIVNTDK) enclose the C2 domain. 11 repeat units span residues 442 to 451 (QTDEIKNDNI), 452 to 461 (QTDEIKNDHI), 462 to 471 (QTDEIKNDNI), 472 to 481 (QTDEIKNDNI), 482 to 491 (QTDEIKNDHI), 492 to 501 (QTDEIKNDNI), 502 to 511 (QTDEIKNDNI), 522 to 531 (QTDEINNDHI), 532 to 541 (QTDEIKNDHI), 542 to 551 (QTDEIKNDHI), and 552 to 561 (QTDEIKNDIN). The segment at 442–561 (QTDEIKNDNI…QTDEIKNDIN (120 aa)) is 12 X 10 AA tandem repeat of Q-T-E-I-[K/N]-N-D-[H/N/I][I/N].

Its subcellular location is the cytoplasmic vesicle. It is found in the secretory vesicle. The protein localises to the rhoptry membrane. It localises to the cell membrane. The protein resides in the host cell membrane. Its function is as follows. Plays an important role in rhoptry physiology and thus is essential for merozoite invasion of host erythrocytes. The polypeptide is Rhoptry surface protein CERLI2 (Plasmodium falciparum (isolate 3D7)).